Here is a 968-residue protein sequence, read N- to C-terminus: RNA polymerase-associated protein RapA (968 aa).

In terms of domain architecture, Helicase ATP-binding spans 164 to 334; it reads EVGQRHAPRV…FARLRLLDPN (171 aa). 177–184 contributes to the ATP binding site; sequence DEVGLGKT. The short motif at 280–283 is the DEAH box element; sequence DEAH. The Helicase C-terminal domain occupies 490–664; that stretch reads RVEWLLNYLV…AAPTEQEGLD (175 aa).

This sequence belongs to the SNF2/RAD54 helicase family. RapA subfamily. In terms of assembly, interacts with the RNAP. Has a higher affinity for the core RNAP than for the holoenzyme. Its ATPase activity is stimulated by binding to RNAP.

Its function is as follows. Transcription regulator that activates transcription by stimulating RNA polymerase (RNAP) recycling in case of stress conditions such as supercoiled DNA or high salt concentrations. Probably acts by releasing the RNAP, when it is trapped or immobilized on tightly supercoiled DNA. Does not activate transcription on linear DNA. Probably not involved in DNA repair. The polypeptide is RNA polymerase-associated protein RapA (Serratia proteamaculans (strain 568)).